Here is a 427-residue protein sequence, read N- to C-terminus: CCA-adding enzyme (427 aa).

ATP contacts are provided by serine 50 and lysine 53. Residues serine 50 and lysine 53 each coordinate CTP. Mg(2+) is bound by residues aspartate 61, aspartate 63, and aspartate 112. 3 residues coordinate ATP: histidine 135, lysine 155, and tyrosine 164. The CTP site is built by histidine 135, lysine 155, and tyrosine 164.

It belongs to the tRNA nucleotidyltransferase/poly(A) polymerase family. Archaeal CCA-adding enzyme subfamily. Homodimer. Mg(2+) is required as a cofactor.

It catalyses the reaction a tRNA precursor + 2 CTP + ATP = a tRNA with a 3' CCA end + 3 diphosphate. The catalysed reaction is a tRNA with a 3' CCA end + 2 CTP + ATP = a tRNA with a 3' CCACCA end + 3 diphosphate. Catalyzes the addition and repair of the essential 3'-terminal CCA sequence in tRNAs without using a nucleic acid template. Adds these three nucleotides in the order of C, C, and A to the tRNA nucleotide-73, using CTP and ATP as substrates and producing inorganic pyrophosphate. tRNA 3'-terminal CCA addition is required both for tRNA processing and repair. Also involved in tRNA surveillance by mediating tandem CCA addition to generate a CCACCA at the 3' terminus of unstable tRNAs. While stable tRNAs receive only 3'-terminal CCA, unstable tRNAs are marked with CCACCA and rapidly degraded. The protein is CCA-adding enzyme of Picrophilus torridus (strain ATCC 700027 / DSM 9790 / JCM 10055 / NBRC 100828 / KAW 2/3).